The following is a 344-amino-acid chain: Dihydroorotate dehydrogenase (quinone) (344 aa).

Residues 64–68 (AGLDK) and T88 each bind FMN. K68 provides a ligand contact to substrate. 113-117 (NRMGF) contacts substrate. Residues N144 and N177 each contribute to the FMN site. Residue N177 coordinates substrate. S180 functions as the Nucleophile in the catalytic mechanism. N182 provides a ligand contact to substrate. Positions 222 and 250 each coordinate FMN. 251–252 (NT) lines the substrate pocket. FMN-binding positions include G273, G302, and 323 to 324 (YS).

This sequence belongs to the dihydroorotate dehydrogenase family. Type 2 subfamily. As to quaternary structure, monomer. It depends on FMN as a cofactor.

The protein resides in the cell membrane. It carries out the reaction (S)-dihydroorotate + a quinone = orotate + a quinol. The protein operates within pyrimidine metabolism; UMP biosynthesis via de novo pathway; orotate from (S)-dihydroorotate (quinone route): step 1/1. Its function is as follows. Catalyzes the conversion of dihydroorotate to orotate with quinone as electron acceptor. This chain is Dihydroorotate dehydrogenase (quinone), found in Polynucleobacter asymbioticus (strain DSM 18221 / CIP 109841 / QLW-P1DMWA-1) (Polynucleobacter necessarius subsp. asymbioticus).